A 130-amino-acid chain; its full sequence is MAQVTYNGTGRRKNSVARVRLVPGTGKITINNKDVVDYVPFANLILDMKQPLTITETTDSYDILVNVNGGGFSGQAGAIRHGISRALLTVDPDFRPALKSAGMLTRDPRMKERKKPGLKKARKASQFSKR.

The tract at residues 99–130 is disordered; that stretch reads KSAGMLTRDPRMKERKKPGLKKARKASQFSKR. Residues 111-130 show a composition bias toward basic residues; sequence KERKKPGLKKARKASQFSKR.

Belongs to the universal ribosomal protein uS9 family.

This chain is Small ribosomal subunit protein uS9, found in Latilactobacillus sakei subsp. sakei (strain 23K) (Lactobacillus sakei subsp. sakei).